The sequence spans 431 residues: Histidinol dehydrogenase (431 aa).

The NAD(+) site is built by tyrosine 127, glutamine 185, and asparagine 208. The substrate site is built by serine 234, glutamine 256, and histidine 259. Zn(2+)-binding residues include glutamine 256 and histidine 259. Catalysis depends on proton acceptor residues glutamate 323 and histidine 324. Histidine 324, aspartate 357, glutamate 411, and histidine 416 together coordinate substrate. Aspartate 357 is a binding site for Zn(2+). Histidine 416 is a Zn(2+) binding site.

This sequence belongs to the histidinol dehydrogenase family. The cofactor is Zn(2+).

The catalysed reaction is L-histidinol + 2 NAD(+) + H2O = L-histidine + 2 NADH + 3 H(+). It functions in the pathway amino-acid biosynthesis; L-histidine biosynthesis; L-histidine from 5-phospho-alpha-D-ribose 1-diphosphate: step 9/9. Catalyzes the sequential NAD-dependent oxidations of L-histidinol to L-histidinaldehyde and then to L-histidine. This chain is Histidinol dehydrogenase, found in Vibrio cholerae serotype O1 (strain ATCC 39315 / El Tor Inaba N16961).